Here is a 175-residue protein sequence, read N- to C-terminus: Gamma-crystallin B (175 aa).

Beta/gamma crystallin 'Greek key' domains are found at residues 2 to 40 (GKIT…RVES) and 41 to 83 (GCWM…CLIP). A connecting peptide region spans residues 84–88 (PHSGA). Beta/gamma crystallin 'Greek key' domains follow at residues 89-129 (YRMK…NVLE) and 130-172 (GSWI…RRVM).

It belongs to the beta/gamma-crystallin family. Monomer.

Functionally, crystallins are the dominant structural components of the vertebrate eye lens. In Homo sapiens (Human), this protein is Gamma-crystallin B (CRYGB).